We begin with the raw amino-acid sequence, 161 residues long: Regulator of ribonuclease activity A (161 aa).

The protein belongs to the RraA family. As to quaternary structure, homotrimer. Binds to both RNA-binding sites in the C-terminal region of Rne and to RhlB.

Its subcellular location is the cytoplasm. In terms of biological role, globally modulates RNA abundance by binding to RNase E (Rne) and regulating its endonucleolytic activity. Can modulate Rne action in a substrate-dependent manner by altering the composition of the degradosome. Modulates RNA-binding and helicase activities of the degradosome. The chain is Regulator of ribonuclease activity A from Sodalis glossinidius (strain morsitans).